We begin with the raw amino-acid sequence, 578 residues long: Serine/threonine-protein kinase D6PKL3 (578 aa).

Low complexity predominate over residues methionine 1–lysine 24. Positions methionine 1 to valine 64 are disordered. Residues glycine 25–serine 34 show a composition bias toward polar residues. The segment covering serine 53–valine 64 has biased composition (low complexity). Positions phenylalanine 182–phenylalanine 516 constitute a Protein kinase domain. Residues leucine 188–valine 196 and lysine 211 contribute to the ATP site. Aspartate 307 functions as the Proton acceptor in the catalytic mechanism. The tract at residues aspartate 325–glutamate 426 is activation loop. Residues isoleucine 575–phenylalanine 578 carry the PIF motif.

This sequence belongs to the protein kinase superfamily. AGC Ser/Thr protein kinase family. Expressed predominantly in root tissue with lower levels found in leaf, stem, seed and flower.

It localises to the cell membrane. It catalyses the reaction L-seryl-[protein] + ATP = O-phospho-L-seryl-[protein] + ADP + H(+). The enzyme catalyses L-threonyl-[protein] + ATP = O-phospho-L-threonyl-[protein] + ADP + H(+). Functionally, protein kinase that regulates the auxin transport activity of PIN auxin efflux facilitators by direct phosphorylation. D6PK-mediated PIN phosphorylation promotes auxin transport in the hypocotyl and this is a prerequisite for PHOT1-dependent hypocotyl bending. This chain is Serine/threonine-protein kinase D6PKL3 (D6PKL3), found in Arabidopsis thaliana (Mouse-ear cress).